Here is a 63-residue protein sequence, read N- to C-terminus: Keratin-associated protein 19-7 (63 aa).

Belongs to the KRTAP type 19 family. In terms of assembly, interacts with hair keratins.

In the hair cortex, hair keratin intermediate filaments are embedded in an interfilamentous matrix, consisting of hair keratin-associated proteins (KRTAP), which are essential for the formation of a rigid and resistant hair shaft through their extensive disulfide bond cross-linking with abundant cysteine residues of hair keratins. The matrix proteins include the high-sulfur and high-glycine-tyrosine keratins. This Homo sapiens (Human) protein is Keratin-associated protein 19-7 (KRTAP19-7).